Consider the following 381-residue polypeptide: Lysophosphatidylserine lipase ABHD12 (381 aa).

The Cytoplasmic portion of the chain corresponds to 1–58 (MRKRNESVTVEHERAAAAPAPLDKGCSLRHSLRLPAADTGMKRPLGRRHGLWFRLRRL). Residues 59–79 (IIWLLGVYIAIPFLVKLCPAI) traverse the membrane as a helical segment. Over 80 to 381 (QAKLVFLNFV…LGIPEHEHHH (302 aa)) the chain is Extracellular. N-linked (GlcNAc...) asparagine glycosylation is present at Asn-106. Ser-229 (nucleophile) is an active-site residue. Active-site charge relay system residues include Asp-316 and His-355.

The protein belongs to the serine esterase family.

Its subcellular location is the endoplasmic reticulum membrane. It catalyses the reaction 1-(9Z-octadecenoyl)-sn-glycero-3-phospho-L-serine + H2O = sn-glycero-3-phospho-L-serine + (9Z)-octadecenoate + H(+). The enzyme catalyses 1-(9Z-octadecenoyl)-sn-glycero-3-phospho-(1'-sn-glycerol) + H2O = sn-glycero-3-phospho-(1'-sn-glycerol) + (9Z)-octadecenoate + H(+). It carries out the reaction 1-(9Z-octadecenoyl)-sn-glycero-3-phospho-(1D-myo-inositol) + H2O = sn-glycero-3-phospho-1D-myo-inositol + (9Z)-octadecenoate + H(+). The catalysed reaction is 1-(9Z-octadecenoyl)-sn-glycero-3-phosphoethanolamine + H2O = sn-glycero-3-phosphoethanolamine + (9Z)-octadecenoate + H(+). It catalyses the reaction 1-(9Z-octadecenoyl)-sn-glycero-3-phosphocholine + H2O = 1-(9Z-octadecenoyl)-sn-glycerol + phosphocholine + H(+). The enzyme catalyses 2-(9Z-octadecenoyl)-glycerol + H2O = glycerol + (9Z)-octadecenoate + H(+). It carries out the reaction 1-hexadecanoyl-sn-glycero-3-phospho-L-serine + H2O = sn-glycero-3-phospho-L-serine + hexadecanoate + H(+). The catalysed reaction is 2-(5Z,8Z,11Z,14Z-eicosatetraenoyl)-glycerol + H2O = glycerol + (5Z,8Z,11Z,14Z)-eicosatetraenoate + H(+). It catalyses the reaction Hydrolyzes glycerol monoesters of long-chain fatty acids.. The enzyme catalyses 1-decanoylglycerol + H2O = decanoate + glycerol + H(+). It carries out the reaction 1-dodecanoylglycerol + H2O = dodecanoate + glycerol + H(+). The catalysed reaction is 1-tetradecanoylglycerol + H2O = tetradecanoate + glycerol + H(+). It catalyses the reaction 2-hexadecanoylglycerol + H2O = glycerol + hexadecanoate + H(+). The enzyme catalyses 1-(9Z-octadecenoyl)-glycerol + H2O = glycerol + (9Z)-octadecenoate + H(+). It carries out the reaction 2-(9Z,12Z-octadecadienoyl)-glycerol + H2O = (9Z,12Z)-octadecadienoate + glycerol + H(+). The catalysed reaction is 1-(5Z,8Z,11Z,14Z-eicosatetraenoyl)-glycerol + H2O = glycerol + (5Z,8Z,11Z,14Z)-eicosatetraenoate + H(+). It catalyses the reaction 1-(9Z,12Z-octadecadienoyl)-glycerol + H2O = (9Z,12Z)-octadecadienoate + glycerol + H(+). The enzyme catalyses 1-hexadecanoylglycerol + H2O = glycerol + hexadecanoate + H(+). It carries out the reaction 1-octadecanoylglycerol + H2O = octadecanoate + glycerol + H(+). The catalysed reaction is 1-octadecanoyl-2-(9,10-epoxyoctadecanoyl)-sn-glycero-3-phospho-L-serine + H2O = 9,10-epoxyoctadecanoate + 1-octadecanoyl-sn-glycero-3-phosphoserine + H(+). It catalyses the reaction 1-octadecanoyl-2-(10-hydroxyoctadecanoyl)-sn-glycero-3-phospho-L-serine + H2O = 1-octadecanoyl-sn-glycero-3-phosphoserine + 10-hydroxyoctadecanoate + H(+). The enzyme catalyses 1-hexadecanoyl-2-(10-hydroxyoctadecanoyl)-sn-glycero-3-phospho-L-serine + H2O = 10-hydroxyoctadecanoate + 1-hexadecanoyl-sn-glycero-3-phospho-L-serine + H(+). Lysophosphatidylserine (LPS) lipase that mediates the hydrolysis of lysophosphatidylserine, a class of signaling lipids that regulates immunological and neurological processes. Represents a major lysophosphatidylserine lipase in the brain, thereby playing a key role in the central nervous system. Also able to hydrolyze oxidized phosphatidylserine; oxidized phosphatidylserine is produced in response to severe inflammatory stress and constitutes a proapoptotic 'eat me' signal. Also has monoacylglycerol (MAG) lipase activity: hydrolyzes 2-arachidonoylglycerol (2-AG), thereby acting as a regulator of endocannabinoid signaling pathways. Has a strong preference for very-long-chain lipid substrates; substrate specificity is likely due to improved catalysis and not improved substrate binding. The sequence is that of Lysophosphatidylserine lipase ABHD12 from Gallus gallus (Chicken).